The primary structure comprises 297 residues: Glycosylphosphatidylinositol anchor biosynthesis protein 11 (297 aa).

A compositionally biased stretch (low complexity) spans 1–18; it reads MTSASPSPLRAANAASSA. Positions 1–26 are disordered; sequence MTSASPSPLRAANAASSAPVPPPAMK. 2 helical membrane-spanning segments follow: residues 44-64 and 76-96; these read SFVH…ALVA and FLAL…GSVL. The interval 97-140 is disordered; it reads PSPPASPVSDGDEKEKEKEKEKEKEKEKRKLPLRAGKLPRKKNQ. Over residues 107–126 the composition is skewed to basic and acidic residues; the sequence is GDEKEKEKEKEKEKEKEKRK. Over residues 127 to 140 the composition is skewed to basic residues; sequence LPLRAGKLPRKKNQ. Asn-139 carries an N-linked (GlcNAc...) asparagine glycan. 4 helical membrane passes run 157–177, 187–207, 225–245, and 253–273; these read LILT…LFGA, VLCA…VHGV, VWGG…PIPL, and AFPI…SVVC.

Belongs to the PIGF family.

It is found in the endoplasmic reticulum membrane. Its pathway is glycolipid biosynthesis; glycosylphosphatidylinositol-anchor biosynthesis. In terms of biological role, acts in the GPI biosynthetic pathway between GlcNAc-PI synthesis and GPI transfer to protein. This Aspergillus fumigatus (strain ATCC MYA-4609 / CBS 101355 / FGSC A1100 / Af293) (Neosartorya fumigata) protein is Glycosylphosphatidylinositol anchor biosynthesis protein 11 (gpi11).